The following is a 270-amino-acid chain: Ethanolamine ammonia-lyase small subunit (270 aa).

The adenosylcob(III)alamin site is built by valine 166, glutamate 187, and cysteine 216.

It belongs to the EutC family. As to quaternary structure, the basic unit is a heterodimer which dimerizes to form tetramers. The heterotetramers trimerize; 6 large subunits form a core ring with 6 small subunits projecting outwards. Adenosylcob(III)alamin is required as a cofactor.

It is found in the bacterial microcompartment. The enzyme catalyses ethanolamine = acetaldehyde + NH4(+). It functions in the pathway amine and polyamine degradation; ethanolamine degradation. In terms of biological role, catalyzes the deamination of various vicinal amino-alcohols to oxo compounds. Allows this organism to utilize ethanolamine as the sole source of nitrogen and carbon in the presence of external vitamin B12. The sequence is that of Ethanolamine ammonia-lyase small subunit from Ralstonia nicotianae (strain ATCC BAA-1114 / GMI1000) (Ralstonia solanacearum).